The following is a 159-amino-acid chain: Transcription elongation factor GreA (159 aa).

Belongs to the GreA/GreB family.

Functionally, necessary for efficient RNA polymerase transcription elongation past template-encoded arresting sites. The arresting sites in DNA have the property of trapping a certain fraction of elongating RNA polymerases that pass through, resulting in locked ternary complexes. Cleavage of the nascent transcript by cleavage factors such as GreA or GreB allows the resumption of elongation from the new 3'terminus. GreA releases sequences of 2 to 3 nucleotides. This Psychromonas ingrahamii (strain DSM 17664 / CCUG 51855 / 37) protein is Transcription elongation factor GreA.